The primary structure comprises 153 residues: Ubiquitin-conjugating enzyme E2-18 kDa (153 aa).

In terms of domain architecture, UBC core spans 2–149; sequence AATRRLTREL…AEEFTKKNAE (148 aa). Cys86 serves as the catalytic Glycyl thioester intermediate.

The protein belongs to the ubiquitin-conjugating enzyme family.

The enzyme catalyses S-ubiquitinyl-[E1 ubiquitin-activating enzyme]-L-cysteine + [E2 ubiquitin-conjugating enzyme]-L-cysteine = [E1 ubiquitin-activating enzyme]-L-cysteine + S-ubiquitinyl-[E2 ubiquitin-conjugating enzyme]-L-cysteine.. It functions in the pathway protein modification; protein ubiquitination. In terms of biological role, catalyzes the covalent attachment of ubiquitin to other proteins. The protein is Ubiquitin-conjugating enzyme E2-18 kDa (Ubc84D) of Drosophila melanogaster (Fruit fly).